The primary structure comprises 207 residues: 3-demethoxyubiquinol 3-hydroxylase (207 aa).

Glu-56, Glu-86, His-89, Glu-138, Glu-170, and His-173 together coordinate Fe cation.

This sequence belongs to the COQ7 family. It depends on Fe cation as a cofactor.

The protein localises to the cell membrane. The enzyme catalyses a 5-methoxy-2-methyl-3-(all-trans-polyprenyl)benzene-1,4-diol + AH2 + O2 = a 3-demethylubiquinol + A + H2O. It functions in the pathway cofactor biosynthesis; ubiquinone biosynthesis. In terms of biological role, catalyzes the hydroxylation of 2-nonaprenyl-3-methyl-6-methoxy-1,4-benzoquinol during ubiquinone biosynthesis. This chain is 3-demethoxyubiquinol 3-hydroxylase, found in Cupriavidus necator (strain ATCC 17699 / DSM 428 / KCTC 22496 / NCIMB 10442 / H16 / Stanier 337) (Ralstonia eutropha).